Consider the following 312-residue polypeptide: Ribosomal RNA small subunit methyltransferase H (312 aa).

S-adenosyl-L-methionine contacts are provided by residues 35–37, Asp55, Phe79, Asp101, and Gln108; that span reads GGH. A disordered region spans residues 286 to 306; it reads LKPSEHEVNENSRSRSSVLRV. Over residues 287 to 298 the composition is skewed to basic and acidic residues; it reads KPSEHEVNENSR.

The protein belongs to the methyltransferase superfamily. RsmH family.

The protein localises to the cytoplasm. It carries out the reaction cytidine(1402) in 16S rRNA + S-adenosyl-L-methionine = N(4)-methylcytidine(1402) in 16S rRNA + S-adenosyl-L-homocysteine + H(+). Its function is as follows. Specifically methylates the N4 position of cytidine in position 1402 (C1402) of 16S rRNA. The sequence is that of Ribosomal RNA small subunit methyltransferase H from Aeromonas hydrophila subsp. hydrophila (strain ATCC 7966 / DSM 30187 / BCRC 13018 / CCUG 14551 / JCM 1027 / KCTC 2358 / NCIMB 9240 / NCTC 8049).